We begin with the raw amino-acid sequence, 563 residues long: Arginine--tRNA ligase (563 aa).

The 'HIGH' region signature appears at 121–131; the sequence is PNIAKPFSIGH.

The protein belongs to the class-I aminoacyl-tRNA synthetase family. As to quaternary structure, monomer.

The protein localises to the cytoplasm. The enzyme catalyses tRNA(Arg) + L-arginine + ATP = L-arginyl-tRNA(Arg) + AMP + diphosphate. This chain is Arginine--tRNA ligase, found in Streptococcus pneumoniae (strain Taiwan19F-14).